The primary structure comprises 125 residues: MESKTFWIVTLLLCGTIQLAICRSEEKSTEKTMMLGGVHDLRGNQNSGEIESLARFAIQEHNKQQNKILEFKKIVKAREQVVAGTMYHLTLEAKEGDQTKNFEAKVWVKPWMNFKQLQEFKESSS.

The signal sequence occupies residues 1–22 (MESKTFWIVTLLLCGTIQLAIC). The Cystatin domain maps to 36 to 124 (GGVHDLRGNQ…KQLQEFKESS (89 aa)). A Secondary area of contact motif is present at residues 80–84 (QVVAG).

It belongs to the cystatin family. Phytocystatin subfamily.

Its subcellular location is the secreted. Functionally, specific inhibitor of cysteine proteinases. Probably involved in the regulation of endogenous processes and in defense against pests and pathogens. The protein is Cysteine proteinase inhibitor 3 (CYS3) of Arabidopsis thaliana (Mouse-ear cress).